The chain runs to 281 residues: DegV domain-containing protein CPE2509 (281 aa).

A DegV domain is found at 4–279 (IAIITDSSCD…PGMVGVSIQK (276 aa)). Hexadecanoate contacts are provided by Thr60 and Ser93.

Functionally, may bind long-chain fatty acids, such as palmitate, and may play a role in lipid transport or fatty acid metabolism. The sequence is that of DegV domain-containing protein CPE2509 from Clostridium perfringens (strain 13 / Type A).